Here is a 102-residue protein sequence, read N- to C-terminus: Small ribosomal subunit protein uS10 (102 aa).

This sequence belongs to the universal ribosomal protein uS10 family. As to quaternary structure, part of the 30S ribosomal subunit.

In terms of biological role, involved in the binding of tRNA to the ribosomes. The chain is Small ribosomal subunit protein uS10 from Chelativorans sp. (strain BNC1).